The following is a 186-amino-acid chain: uncharacterized protein (186 aa).

The N-terminal stretch at 1–18 (MKKFFFAAALVVSGLLVG) is a signal peptide. Cysteine 19 is lipidated: N-palmitoyl cysteine. Residue cysteine 19 is the site of S-diacylglycerol cysteine attachment.

The protein resides in the cell membrane. This is an uncharacterized protein from Salmonella typhimurium (strain LT2 / SGSC1412 / ATCC 700720).